A 306-amino-acid polypeptide reads, in one-letter code: Pantothenate kinase (306 aa).

90–97 contacts ATP; that stretch reads GSVAVGKS.

Belongs to the prokaryotic pantothenate kinase family.

The protein localises to the cytoplasm. The enzyme catalyses (R)-pantothenate + ATP = (R)-4'-phosphopantothenate + ADP + H(+). It functions in the pathway cofactor biosynthesis; coenzyme A biosynthesis; CoA from (R)-pantothenate: step 1/5. The polypeptide is Pantothenate kinase (Lactococcus lactis subsp. cremoris (strain MG1363)).